A 172-amino-acid chain; its full sequence is Protein-export protein SecB (172 aa).

This sequence belongs to the SecB family. Homotetramer, a dimer of dimers. One homotetramer interacts with 1 SecA dimer.

Its subcellular location is the cytoplasm. Functionally, one of the proteins required for the normal export of preproteins out of the cell cytoplasm. It is a molecular chaperone that binds to a subset of precursor proteins, maintaining them in a translocation-competent state. It also specifically binds to its receptor SecA. This Bordetella avium (strain 197N) protein is Protein-export protein SecB.